A 318-amino-acid chain; its full sequence is Dehydrogenase/reductase SDR family member 7C-B (318 aa).

The signal sequence occupies residues 1–32 (MGMSDIMWLDVSWAWLVLTAVLLAAAVFYLYT). NAD(+) is bound at residue 49 to 73 (LITDSLSTVGNECAKLFHAGGARLI). A substrate-binding site is contributed by Ser-186. Catalysis depends on Tyr-199, which acts as the Proton acceptor.

The protein belongs to the short-chain dehydrogenases/reductases (SDR) family.

It localises to the secreted. In terms of biological role, putative oxidoreductase. The sequence is that of Dehydrogenase/reductase SDR family member 7C-B (dhrs7cb) from Danio rerio (Zebrafish).